Consider the following 527-residue polypeptide: Protein PyrBI (527 aa).

The aspartate carbamoyltransferase stretch occupies residues 1 to 342; that stretch reads MKRDFLGRTL…MFGGALEAPF (342 aa). The linker stretch occupies residues 343–357; the sequence is DTSKKEEKPEEDFII. The segment at 368–527 is aspartate carbamoyltransferase regulatory region; the sequence is VQKEGKRGIK…PHSFEEIWSI (160 aa). Residues Cys-483, Cys-488, Cys-512, and Cys-515 each coordinate Zn(2+).

This sequence in the N-terminal section; belongs to the aspartate/ornithine carbamoyltransferase superfamily. ATCase family. It in the C-terminal section; belongs to the PyrI family.

The enzyme catalyses carbamoyl phosphate + L-aspartate = N-carbamoyl-L-aspartate + phosphate + H(+). It participates in pyrimidine metabolism; UMP biosynthesis via de novo pathway; (S)-dihydroorotate from bicarbonate: step 2/3. This is Protein PyrBI (pyrBI) from Thermotoga maritima (strain ATCC 43589 / DSM 3109 / JCM 10099 / NBRC 100826 / MSB8).